The sequence spans 442 residues: Tubulin beta chain (442 aa).

GTP-binding residues include glutamine 11, glutamate 67, serine 136, glycine 140, threonine 141, glycine 142, and asparagine 202. Glutamate 67 is a Mg(2+) binding site.

This sequence belongs to the tubulin family. Dimer of alpha and beta chains. A typical microtubule is a hollow water-filled tube with an outer diameter of 25 nm and an inner diameter of 15 nM. Alpha-beta heterodimers associate head-to-tail to form protofilaments running lengthwise along the microtubule wall with the beta-tubulin subunit facing the microtubule plus end conferring a structural polarity. Microtubules usually have 13 protofilaments but different protofilament numbers can be found in some organisms and specialized cells. It depends on Mg(2+) as a cofactor.

It is found in the cytoplasm. It localises to the cytoskeleton. In terms of biological role, tubulin is the major constituent of microtubules, a cylinder consisting of laterally associated linear protofilaments composed of alpha- and beta-tubulin heterodimers. Microtubules grow by the addition of GTP-tubulin dimers to the microtubule end, where a stabilizing cap forms. Below the cap, tubulin dimers are in GDP-bound state, owing to GTPase activity of alpha-tubulin. The polypeptide is Tubulin beta chain (TUBB) (Euglena gracilis).